The primary structure comprises 167 residues: CGG triplet repeat-binding protein 1 (167 aa).

Serine 56 is subject to Phosphoserine. The tract at residues 65-86 (KTHTKRKAEFEEQNVRKKQRPL) is disordered. A Nuclear localization signal motif is present at residues 80–84 (RKKQR). Residue serine 164 is modified to Phosphoserine.

Its subcellular location is the nucleus. Its function is as follows. Binds to nonmethylated 5'-d(CGG)(n)-3' trinucleotide repeats in the FMR1 promoter. May play a role in regulating FMR1 promoter. In Mus musculus (Mouse), this protein is CGG triplet repeat-binding protein 1 (Cggbp1).